The sequence spans 532 residues: Spore germination protein 270-11 (532 aa).

Disordered stretches follow at residues 113–225 and 328–436; these read TTTS…GYGS and LSPT…TTGT. Residues 329–426 are compositionally biased toward low complexity; that stretch reads SPTCSDSSSP…GSGSSSETQP (98 aa). Tandem repeats lie at residues 339 to 342, 343 to 346, 347 to 350, 351 to 354, 355 to 358, 359 to 362, 363 to 366, 367 to 370, 371 to 374, 375 to 378, 397 to 400, 401 to 404, and 405 to 408. Positions 339 to 378 are 10 X 4 AA tandem repeats of T-[EP]-T-[EP]; that stretch reads TPTPTETPTETPTETPTETPTETPTETPTETPTETETPTP. A 3 X 4 AA tandem repeats of T-[EP]-T-[PD] region spans residues 397–408; that stretch reads TPTPTETDTPTP.

This is Spore germination protein 270-11 (celB) from Dictyostelium discoideum (Social amoeba).